The primary structure comprises 134 residues: UPF0412 protein YaaI (134 aa).

Residues 1 to 23 form the signal peptide; the sequence is MKSVFTISASLAISLMLCCTAQA.

Belongs to the UPF0412 family.

The chain is UPF0412 protein YaaI from Escherichia coli (strain K12).